The sequence spans 329 residues: Malate dehydrogenase (329 aa).

13-19 (GAAGNIS) contributes to the NAD(+) binding site. The substrate site is built by Arg94 and Arg100. NAD(+) contacts are provided by residues Asn107, Gln114, and 131-133 (VGN). Asn133 and Arg164 together coordinate substrate. His189 serves as the catalytic Proton acceptor.

It belongs to the LDH/MDH superfamily. MDH type 2 family.

It catalyses the reaction (S)-malate + NAD(+) = oxaloacetate + NADH + H(+). Its function is as follows. Catalyzes the reversible oxidation of malate to oxaloacetate. The chain is Malate dehydrogenase from Psychrobacter cryohalolentis (strain ATCC BAA-1226 / DSM 17306 / VKM B-2378 / K5).